Reading from the N-terminus, the 311-residue chain is Syndecan-1 (311 aa).

Positions 1 to 22 (MRRAALWLWLCALALRLQPALP) are cleaved as a signal peptide. Topologically, residues 23–255 (QIVAVNVPPE…SLLDRKEVLG (233 aa)) are extracellular. Disordered stretches follow at residues 29–59 (VPPEDQDGSGDDSDNFSGSGTGALPDTLSRQ) and 152–184 (SHPHGGMQPGLHETSAPTAPGQPDHQPPRVEGG). The segment covering 32–42 (EDQDGSGDDSD) has biased composition (acidic residues). A glycan (O-linked (Xyl...) (chondroitin sulfate) serine) is linked at S37. Residue N43 is glycosylated (N-linked (GlcNAc...) asparagine). S45 and S47 each carry an O-linked (Xyl...) (heparan sulfate) serine glycan. O-linked (Xyl...) (chondroitin sulfate) serine glycans are attached at residues S207 and S217. A helical transmembrane segment spans residues 256–276 (GVIAGGLVGLIFAVCLVAFML). The Cytoplasmic segment spans residues 277-311 (YRMKKKDEGSYSLEEPKQANGGAYQKPTKQEEFYA). The interval 285 to 311 (GSYSLEEPKQANGGAYQKPTKQEEFYA) is disordered. S286 carries the phosphoserine modification.

It belongs to the syndecan proteoglycan family. In terms of assembly, interacts with CDCP1. Interacts (via C-terminus) with TIAM1 (via PDZ domain). Interacts with MDK. Shedding is enhanced by a number of factors such as heparanase, thrombin or EGF. Also by stress and wound healing. PMA-mediated shedding is inhibited by TIMP3.

It localises to the membrane. Its subcellular location is the secreted. The protein resides in the extracellular exosome. Its function is as follows. Cell surface proteoglycan that contains both heparan sulfate and chondroitin sulfate and that links the cytoskeleton to the interstitial matrix. Regulates exosome biogenesis in concert with SDCBP and PDCD6IP. Able to induce its own expression in dental mesenchymal cells and also in the neighboring dental epithelial cells via an MSX1-mediated pathway. The polypeptide is Syndecan-1 (Mus musculus (Mouse)).